We begin with the raw amino-acid sequence, 710 residues long: DNA topoisomerase 1 (710 aa).

The disordered stretch occupies residues 1-22; sequence MPTSTKSKTKTTTKKKTTRKRV. Basic residues predominate over residues 7–22; it reads SKTKTTTKKKTTRKRV. Positions 26–136 constitute a Toprim domain; that stretch reads KNLVIVESPA…EKNRVVFNEI (111 aa). Positions 32 and 105 each coordinate Mg(2+). Residues 152–574 form the Topo IA-type catalytic domain; that stretch reads DVDLVDAQQA…QFYKPFAKEL (423 aa). An interaction with DNA region spans residues 186–191; the sequence is SAGRVQ. Catalysis depends on tyrosine 321, which acts as the O-(5'-phospho-DNA)-tyrosine intermediate. 2 consecutive C4-type zinc fingers follow at residues 595–621 and 635–663; these read CDVC…FPDC and CPLC…YPDC. The C4-type 3; atypical zinc-finger motif lies at 676-702; it reads CPKSGHFLVEKKVRGGGKQVVCSNDEC.

This sequence belongs to the type IA topoisomerase family. Monomer. The cofactor is Mg(2+).

The enzyme catalyses ATP-independent breakage of single-stranded DNA, followed by passage and rejoining.. Its function is as follows. Releases the supercoiling and torsional tension of DNA, which is introduced during the DNA replication and transcription, by transiently cleaving and rejoining one strand of the DNA duplex. Introduces a single-strand break via transesterification at a target site in duplex DNA. The scissile phosphodiester is attacked by the catalytic tyrosine of the enzyme, resulting in the formation of a DNA-(5'-phosphotyrosyl)-enzyme intermediate and the expulsion of a 3'-OH DNA strand. The free DNA strand then undergoes passage around the unbroken strand, thus removing DNA supercoils. Finally, in the religation step, the DNA 3'-OH attacks the covalent intermediate to expel the active-site tyrosine and restore the DNA phosphodiester backbone. The sequence is that of DNA topoisomerase 1 from Lactococcus lactis subsp. lactis (strain IL1403) (Streptococcus lactis).